A 335-amino-acid chain; its full sequence is DNA-directed RNA polymerase subunit alpha (335 aa).

Residues 1–233 form an alpha N-terminal domain (alpha-NTD) region; it reads MMLNATEFLT…QQISIFVDLE (233 aa). The tract at residues 247–335 is alpha C-terminal domain (alpha-CTD); that stretch reads VDPVLLRPVD…VDDRFSYRSR (89 aa).

The protein belongs to the RNA polymerase alpha chain family. In terms of assembly, homodimer. The RNAP catalytic core consists of 2 alpha, 1 beta, 1 beta' and 1 omega subunit. When a sigma factor is associated with the core the holoenzyme is formed, which can initiate transcription.

It catalyses the reaction RNA(n) + a ribonucleoside 5'-triphosphate = RNA(n+1) + diphosphate. DNA-dependent RNA polymerase catalyzes the transcription of DNA into RNA using the four ribonucleoside triphosphates as substrates. The sequence is that of DNA-directed RNA polymerase subunit alpha from Psychrobacter arcticus (strain DSM 17307 / VKM B-2377 / 273-4).